A 264-amino-acid polypeptide reads, in one-letter code: 3-methyl-2-oxobutanoate hydroxymethyltransferase (264 aa).

Mg(2+) is bound by residues Asp-44 and Asp-83. 3-methyl-2-oxobutanoate-binding positions include 44 to 45 (DS), Asp-83, and Lys-111. Glu-113 provides a ligand contact to Mg(2+). The active-site Proton acceptor is Glu-180.

This sequence belongs to the PanB family. Homodecamer; pentamer of dimers. It depends on Mg(2+) as a cofactor.

Its subcellular location is the cytoplasm. It carries out the reaction 3-methyl-2-oxobutanoate + (6R)-5,10-methylene-5,6,7,8-tetrahydrofolate + H2O = 2-dehydropantoate + (6S)-5,6,7,8-tetrahydrofolate. It participates in cofactor biosynthesis; (R)-pantothenate biosynthesis; (R)-pantoate from 3-methyl-2-oxobutanoate: step 1/2. Its function is as follows. Catalyzes the reversible reaction in which hydroxymethyl group from 5,10-methylenetetrahydrofolate is transferred onto alpha-ketoisovalerate to form ketopantoate. This Marinobacter nauticus (strain ATCC 700491 / DSM 11845 / VT8) (Marinobacter aquaeolei) protein is 3-methyl-2-oxobutanoate hydroxymethyltransferase.